The primary structure comprises 357 residues: ATP-dependent 6-phosphofructokinase 2 (357 aa).

Residues G12, K80 to G81, and G107 to S110 each bind ATP. D108 serves as a coordination point for Mg(2+). Substrate-binding positions include T131–D133, R168, M175–R177, E229, R272, and H278–R281. The active-site Proton acceptor is the D133.

This sequence belongs to the phosphofructokinase type A (PFKA) family. Mixed-substrate PFK group III subfamily. As to quaternary structure, homodimer or homotetramer. Requires Mg(2+) as cofactor.

The protein resides in the cytoplasm. It catalyses the reaction beta-D-fructose 6-phosphate + ATP = beta-D-fructose 1,6-bisphosphate + ADP + H(+). Its pathway is carbohydrate degradation; glycolysis; D-glyceraldehyde 3-phosphate and glycerone phosphate from D-glucose: step 3/4. With respect to regulation, subject to allosteric activation by ADP and other diphosphonucleosides, and inhibition by phosphoenolpyruvate. Catalyzes the phosphorylation of D-fructose 6-phosphate to fructose 1,6-bisphosphate by ATP, the first committing step of glycolysis. This is ATP-dependent 6-phosphofructokinase 2 from Nostoc sp. (strain PCC 7120 / SAG 25.82 / UTEX 2576).